Reading from the N-terminus, the 20-residue chain is Alpha-basrubrin (20 aa).

Residues 1–13 (GADFQECMKEHSQ) are compositionally biased toward basic and acidic residues. The disordered stretch occupies residues 1 to 20 (GADFQECMKEHSQKQHQHQG).

Its function is as follows. Possesses antifungal activity against B.cinerea, M.arachidicola and F.oxysporum but not C.comatus and R.solani. Inhibits HIV-1 reverse transcriptase and cell-free translation. In Basella alba (Malabar spinach), this protein is Alpha-basrubrin.